The sequence spans 290 residues: Nitrogenase iron protein 1 (290 aa).

10-17 contacts ATP; the sequence is GKGGIGKS. Residue Cys-98 participates in [4Fe-4S] cluster binding. At Arg-101 the chain carries ADP-ribosylarginine; by dinitrogenase reductase ADP-ribosyltransferase. Cys-133 is a binding site for [4Fe-4S] cluster.

This sequence belongs to the NifH/BchL/ChlL family. As to quaternary structure, homodimer. Requires [4Fe-4S] cluster as cofactor. The reversible ADP-ribosylation of Arg-101 inactivates the nitrogenase reductase and regulates nitrogenase activity.

It carries out the reaction N2 + 8 reduced [2Fe-2S]-[ferredoxin] + 16 ATP + 16 H2O = H2 + 8 oxidized [2Fe-2S]-[ferredoxin] + 2 NH4(+) + 16 ADP + 16 phosphate + 6 H(+). With respect to regulation, nitrogenase holoenzyme is subject to 'conformational protection' by FeSII; under oxidizing conditions FeSII binds to the holoenzyme and reversibly protects it from oxidation. Its function is as follows. The key enzymatic reactions in nitrogen fixation are catalyzed by the nitrogenase complex, which has 2 components: the iron protein (component 2) and a component 1 which is either a molybdenum-iron protein, a vanadium-iron, or an iron-iron protein. This is Nitrogenase iron protein 1 (nifH1) from Azotobacter vinelandii.